Reading from the N-terminus, the 298-residue chain is 4-hydroxy-tetrahydrodipicolinate synthase (298 aa).

Thr48 provides a ligand contact to pyruvate. Tyr137 (proton donor/acceptor) is an active-site residue. The Schiff-base intermediate with substrate role is filled by Lys166. Ile207 contributes to the pyruvate binding site.

The protein belongs to the DapA family. As to quaternary structure, homotetramer; dimer of dimers.

The protein resides in the cytoplasm. It carries out the reaction L-aspartate 4-semialdehyde + pyruvate = (2S,4S)-4-hydroxy-2,3,4,5-tetrahydrodipicolinate + H2O + H(+). Its pathway is amino-acid biosynthesis; L-lysine biosynthesis via DAP pathway; (S)-tetrahydrodipicolinate from L-aspartate: step 3/4. Its function is as follows. Catalyzes the condensation of (S)-aspartate-beta-semialdehyde [(S)-ASA] and pyruvate to 4-hydroxy-tetrahydrodipicolinate (HTPA). This is 4-hydroxy-tetrahydrodipicolinate synthase from Campylobacter hominis (strain ATCC BAA-381 / DSM 21671 / CCUG 45161 / LMG 19568 / NCTC 13146 / CH001A).